The sequence spans 343 residues: Glycerol-3-phosphate dehydrogenase [NAD(P)+] (343 aa).

NADPH is bound by residues tryptophan 29, arginine 49, and lysine 122. Sn-glycerol 3-phosphate-binding residues include lysine 122, glycine 150, and serine 152. Alanine 154 is an NADPH binding site. Residues lysine 205, aspartate 258, serine 268, arginine 269, and asparagine 270 each contribute to the sn-glycerol 3-phosphate site. Lysine 205 (proton acceptor) is an active-site residue. Arginine 269 is an NADPH binding site. NADPH-binding residues include leucine 288 and glutamate 290.

The protein belongs to the NAD-dependent glycerol-3-phosphate dehydrogenase family.

The protein localises to the cytoplasm. It catalyses the reaction sn-glycerol 3-phosphate + NAD(+) = dihydroxyacetone phosphate + NADH + H(+). The catalysed reaction is sn-glycerol 3-phosphate + NADP(+) = dihydroxyacetone phosphate + NADPH + H(+). The protein operates within membrane lipid metabolism; glycerophospholipid metabolism. Catalyzes the reduction of the glycolytic intermediate dihydroxyacetone phosphate (DHAP) to sn-glycerol 3-phosphate (G3P), the key precursor for phospholipid synthesis. The chain is Glycerol-3-phosphate dehydrogenase [NAD(P)+] from Mesorhizobium japonicum (strain LMG 29417 / CECT 9101 / MAFF 303099) (Mesorhizobium loti (strain MAFF 303099)).